Reading from the N-terminus, the 253-residue chain is H repeat-associated putative transposase YbfD (253 aa).

This sequence belongs to the transposase 11 family.

The polypeptide is H repeat-associated putative transposase YbfD (ybfD) (Escherichia coli (strain K12)).